The primary structure comprises 570 residues: Serine/threonine-protein kinase STY17 (570 aa).

Residues 112–145 (LNGNSGDVDPSDPAVNEDAQSSYNSRSLAPPTFG) form a disordered region. Polar residues predominate over residues 129–145 (DAQSSYNSRSLAPPTFG). Positions 180-260 (EITFSTIDRP…PCSKQKSITF (81 aa)) constitute an ACT domain. The Protein kinase domain occupies 292–545 (LKIEKKVACG…EIIEMLNQLI (254 aa)). ATP is bound by residues 298–306 (VACGSYGEL) and Lys-319. Asp-413 (proton acceptor) is an active-site residue. A Phosphoserine modification is found at Ser-441. Thr-445 is subject to Phosphothreonine.

It belongs to the protein kinase superfamily. Ser/Thr protein kinase family. Autophosphorylated on serine and threonine residues. Autophosphorylated at Thr-445.

The protein resides in the cytoplasm. Its subcellular location is the cytosol. It carries out the reaction L-seryl-[protein] + ATP = O-phospho-L-seryl-[protein] + ADP + H(+). The catalysed reaction is L-threonyl-[protein] + ATP = O-phospho-L-threonyl-[protein] + ADP + H(+). Its activity is regulated as follows. Activated by autophosphorylation at Thr-445. Serine/threonine protein kinase that specifically phosphorylates chloroplast precursor proteins in the cytosol within the cleavable presequences (transit peptides). May be part of a cytosolic regulatory network involved in chloroplast protein import. Does not phosphorylate mitochondrion precursor proteins. Specific for ATP and does not utilize other NTPs. Plays a role in chloroplast biogenesis and differentiation in cotyledons, possibly through phosphorylation of chloroplast preproteins. The protein is Serine/threonine-protein kinase STY17 of Arabidopsis thaliana (Mouse-ear cress).